Here is a 318-residue protein sequence, read N- to C-terminus: uncharacterized protein (318 aa).

It to A.aeolicus AA07 and AA11.

This is an uncharacterized protein from Aquifex aeolicus (strain VF5).